A 361-amino-acid chain; its full sequence is tRNA-specific 2-thiouridylase MnmA (361 aa).

ATP contacts are provided by residues Ala-8 to Ser-15 and Met-35. The tract at residues Asn-95 to Asp-97 is interaction with target base in tRNA. Cys-100 serves as the catalytic Nucleophile. Cysteines 100 and 196 form a disulfide. Gly-124 is a binding site for ATP. The segment at Lys-146–Gln-148 is interaction with tRNA. Cys-196 acts as the Cysteine persulfide intermediate in catalysis. The tract at residues Arg-303 to Tyr-304 is interaction with tRNA.

Belongs to the MnmA/TRMU family.

The protein localises to the cytoplasm. The catalysed reaction is S-sulfanyl-L-cysteinyl-[protein] + uridine(34) in tRNA + AH2 + ATP = 2-thiouridine(34) in tRNA + L-cysteinyl-[protein] + A + AMP + diphosphate + H(+). In terms of biological role, catalyzes the 2-thiolation of uridine at the wobble position (U34) of tRNA, leading to the formation of s(2)U34. This Chlamydia pneumoniae (Chlamydophila pneumoniae) protein is tRNA-specific 2-thiouridylase MnmA.